The following is a 737-amino-acid chain: Ribosome-releasing factor 2, mitochondrial (737 aa).

The N-terminal 29 residues, Met-1 to Tyr-29, are a transit peptide targeting the mitochondrion. Residues Ser-31–Glu-310 form the tr-type G domain. GTP is bound by residues Ala-40–Thr-47, Asp-104–His-108, and Asn-158–Asp-161.

It belongs to the TRAFAC class translation factor GTPase superfamily. Classic translation factor GTPase family. EF-G/EF-2 subfamily.

Its subcellular location is the mitochondrion. Functionally, mitochondrial GTPase that mediates the disassembly of ribosomes from messenger RNA at the termination of mitochondrial protein biosynthesis. Not involved in the GTP-dependent ribosomal translocation step during translation elongation. The sequence is that of Ribosome-releasing factor 2, mitochondrial from Drosophila persimilis (Fruit fly).